Reading from the N-terminus, the 354-residue chain is 3-isopropylmalate dehydrogenase (354 aa).

76–87 (GPRWDGAKERPE) contacts NAD(+). Substrate contacts are provided by Arg-94, Arg-104, Arg-130, and Asp-215. The Mg(2+) site is built by Asp-215, Asp-239, and Asp-243. 273-285 (GSAPDIAGKNKAN) serves as a coordination point for NAD(+).

Belongs to the isocitrate and isopropylmalate dehydrogenases family. LeuB type 1 subfamily. Homodimer. Mg(2+) serves as cofactor. Requires Mn(2+) as cofactor.

Its subcellular location is the cytoplasm. It catalyses the reaction (2R,3S)-3-isopropylmalate + NAD(+) = 4-methyl-2-oxopentanoate + CO2 + NADH. The protein operates within amino-acid biosynthesis; L-leucine biosynthesis; L-leucine from 3-methyl-2-oxobutanoate: step 3/4. In terms of biological role, catalyzes the oxidation of 3-carboxy-2-hydroxy-4-methylpentanoate (3-isopropylmalate) to 3-carboxy-4-methyl-2-oxopentanoate. The product decarboxylates to 4-methyl-2 oxopentanoate. This Bacillus anthracis protein is 3-isopropylmalate dehydrogenase.